Consider the following 62-residue polypeptide: Large ribosomal subunit protein bL28 (62 aa).

Belongs to the bacterial ribosomal protein bL28 family.

This chain is Large ribosomal subunit protein bL28, found in Helicobacter pylori (strain P12).